The primary structure comprises 100 residues: Integration host factor subunit alpha 2 (100 aa).

This sequence belongs to the bacterial histone-like protein family. As to quaternary structure, heterodimer of an alpha and a beta chain.

This protein is one of the two subunits of integration host factor, a specific DNA-binding protein that functions in genetic recombination as well as in transcriptional and translational control. In Dechloromonas aromatica (strain RCB), this protein is Integration host factor subunit alpha 2.